The chain runs to 349 residues: Insulin gene enhancer protein ISL-1 (349 aa).

2 LIM zinc-binding domains span residues cysteine 17 to aspartate 70 and cysteine 79 to histidine 133. Positions threonine 181–serine 240 form a DNA-binding region, homeobox. Residues glycine 262–tryptophan 291 are LIM-binding domain (LID). The segment at valine 312–alanine 349 is disordered. Positions serine 321 to valine 343 are enriched in polar residues.

In terms of assembly, at neuronal promoters, displaces LDB1 from LHX3 LIM domain to form a ternary complex in which ISL1 contacts both LHX3 and LDB1; allosteric structural changes in the DNA binding domain of LHX3, induced by the ISL1:LHX3 interaction, may explain differences in sequence specificity of the different complexes. Interacts with LHX3. Interacts (via C-terminus) with POU4F2 (via C-terminus) isoform 1. Interacts with POU3F2. Interacts with POU4F3. Interacts (via N-terminal domain) with MLIP; the interaction represses ISL1 transactivator activity. Interacts with GCN5/KAT2A. Interactions of ISL1 with MLIP1 or KAT2A may be mutually exclusive. In terms of processing, ubiquitinated probably by WWP1 E3 ubiquitin ligase; ubiquitination is followed by protein degradation. Phosphorylated. Expressed in subsets of neurons of the adrenal medulla and dorsal root ganglion, inner nuclear and ganglion cell layers in the retina, the pineal and some regions of the brain.

The protein resides in the nucleus. In terms of biological role, DNA-binding transcriptional activator. Recognizes and binds to the consensus octamer binding site 5'-ATAATTAA-3' in promoter of target genes. Plays a fundamental role in the gene regulatory network essential for retinal ganglion cell (RGC) differentiation. Cooperates with the transcription factor POU4F2 to achieve maximal levels of expression of RGC target genes and RGC fate specification in the developing retina. Involved in the specification of motor neurons in cooperation with LHX3 and LDB1. Binds to insulin gene enhancer sequences. Essential for heart development. Marker of one progenitor cell population that give rise to the outflow tract, right ventricle, a subset of left ventricular cells, and a large number of atrial cells as well, its function is required for these progenitors to contribute to the heart. Controls the expression of FGF and BMP growth factors in this cell population and is required for proliferation and survival of cells within pharyngeal foregut endoderm and adjacent splanchnic mesoderm as well as for migration of cardiac progenitors into the heart. This chain is Insulin gene enhancer protein ISL-1 (ISL1), found in Homo sapiens (Human).